A 376-amino-acid polypeptide reads, in one-letter code: PCM7-4 (376 aa).

Functionally, has antibacterial activity against Listeria monocytogenes. This Bacillus velezensis protein is PCM7-4.